Reading from the N-terminus, the 460-residue chain is Proton extrusion protein PxcA (460 aa).

Disordered stretches follow at residues 82 to 128 (FSRL…QRRD) and 143 to 190 (SRYK…GSGN). Over residues 90 to 102 (QNGSGPTSAQDKA) the composition is skewed to polar residues. A compositionally biased stretch (low complexity) spans 107-120 (AAEANVSESSSENS). Polar residues predominate over residues 151 to 163 (KSQPISASISTSP). Over residues 171–184 (QPTSTQPSSSNVSV) the composition is skewed to low complexity. 4 consecutive transmembrane segments (helical) span residues 242-262 (FLLL…NFLF), 337-357 (GLKN…LIFV), 373-393 (IYGL…DVFV), and 420-440 (FIYG…KYWI).

It belongs to the CemA family.

The protein resides in the cell inner membrane. Its function is as follows. Required for H(+) efflux immediately after light irradiation to form a rapid H(+) concentration gradient across the thylakoid membranes. Together with PxcL, contributes to transient H(+) uptake following dark to light transition. The sequence is that of Proton extrusion protein PxcA from Synechococcus sp. (strain JA-2-3B'a(2-13)) (Cyanobacteria bacterium Yellowstone B-Prime).